The primary structure comprises 1097 residues: Protein kinase C-like 1 (1097 aa).

REM-1 domains are found at residues 2 to 76 (STSQ…QMQR) and 106 to 183 (KYEC…FSIN). The C2 domain occupies 189-311 (RDYEIMDSTK…AKDQGSSGWL (123 aa)). The segment at 304–359 (DQGSSGWLPAANLPQTGGSGAGTGSSMTGGASYGATSPLPAHNDLRPSVSPSSDAK) is disordered. A compositionally biased stretch (low complexity) spans 327-340 (GSSMTGGASYGATS). 2 Phorbol-ester/DAG-type zinc fingers span residues 415–462 (GHQF…VTKC) and 480–530 (PHRF…PDFC). Disordered regions lie at residues 548-594 (KVSP…LRPA), 615-646 (YQEPVELPPQQQNQVVPSTRRRGHGSTDLSFE), and 724-763 (ETSHAKQQNQQVQQVQQQEELGHQRTHSSGKSGKSKRRKR). The span at 574 to 583 (PSMDSEETLH) shows a compositional bias: basic and acidic residues. Residues 730 to 741 (QQNQQVQQVQQQ) are compositionally biased toward low complexity. Basic residues predominate over residues 747-763 (QRTHSSGKSGKSKRRKR). Residues 770 to 1029 (FQFLAVLGKG…AEEIMEHPYF (260 aa)) enclose the Protein kinase domain. ATP is bound by residues 776-784 (LGKGNFGKV) and Lys-799. The active-site Proton acceptor is Asp-895. The AGC-kinase C-terminal domain occupies 1030-1097 (HDVNFDDVLN…FSHISDNATI (68 aa)).

Belongs to the protein kinase superfamily. AGC Ser/Thr protein kinase family. PKC subfamily.

The enzyme catalyses L-seryl-[protein] + ATP = O-phospho-L-seryl-[protein] + ADP + H(+). The catalysed reaction is L-threonyl-[protein] + ATP = O-phospho-L-threonyl-[protein] + ADP + H(+). Necessary for osmotic stability. The sequence is that of Protein kinase C-like 1 (PKC1) from Candida albicans (Yeast).